The primary structure comprises 214 residues: tRNA (guanine-N(7)-)-methyltransferase (214 aa).

E43, E68, D95, and D117 together coordinate S-adenosyl-L-methionine. D117 is an active-site residue. Residues K121, D153, and 190–193 (TEYE) each bind substrate.

Belongs to the class I-like SAM-binding methyltransferase superfamily. TrmB family.

The catalysed reaction is guanosine(46) in tRNA + S-adenosyl-L-methionine = N(7)-methylguanosine(46) in tRNA + S-adenosyl-L-homocysteine. It participates in tRNA modification; N(7)-methylguanine-tRNA biosynthesis. Catalyzes the formation of N(7)-methylguanine at position 46 (m7G46) in tRNA. This is tRNA (guanine-N(7)-)-methyltransferase from Staphylococcus aureus (strain Mu3 / ATCC 700698).